Reading from the N-terminus, the 277-residue chain is Glycerol-3-phosphate acyltransferase (277 aa).

5 consecutive transmembrane segments (helical) span residues 3 to 23 (LFIFLILVGYLMGSINSAIIV), 55 to 75 (IMVMVFDALKGILPVILAKLL), 79 to 99 (PVTVAFTALAAVVGHMYPVFF), 111 to 131 (IGALLAFHFVIGVMVAATWLL), and 155 to 175 (LILVGNLNIFPPLFMITILVL). Residues 207–277 (SPATSAEQEF…PKTKTVKEKE (71 aa)) are disordered. A compositionally biased stretch (basic and acidic residues) spans 216 to 239 (FPGKEVIDTNIDETEKTEQAEAVK). 2 stretches are compositionally biased toward basic residues: residues 240–253 (KPKAKKATTKAKKT) and 262–271 (KPRSTKPKTK).

This sequence belongs to the PlsY family. As to quaternary structure, probably interacts with PlsX.

It is found in the cell inner membrane. The enzyme catalyses an acyl phosphate + sn-glycerol 3-phosphate = a 1-acyl-sn-glycero-3-phosphate + phosphate. Its pathway is lipid metabolism; phospholipid metabolism. In terms of biological role, catalyzes the transfer of an acyl group from acyl-phosphate (acyl-PO(4)) to glycerol-3-phosphate (G3P) to form lysophosphatidic acid (LPA). This enzyme utilizes acyl-phosphate as fatty acyl donor, but not acyl-CoA or acyl-ACP. This chain is Glycerol-3-phosphate acyltransferase, found in Legionella pneumophila (strain Paris).